Reading from the N-terminus, the 232-residue chain is Probable thiopurine S-methyltransferase (232 aa).

S-adenosyl-L-methionine is bound by residues 14–25 (WENRWQEGRTGF), L54, E75, and R137. Position 25 (F25) interacts with substrate.

It belongs to the class I-like SAM-binding methyltransferase superfamily. TPMT family.

It is found in the cytoplasm. The enzyme catalyses S-adenosyl-L-methionine + a thiopurine = S-adenosyl-L-homocysteine + a thiopurine S-methylether.. The sequence is that of Probable thiopurine S-methyltransferase (tpmt) from Danio rerio (Zebrafish).